The sequence spans 156 residues: Small ribosomal subunit protein uS7 (156 aa).

It belongs to the universal ribosomal protein uS7 family. As to quaternary structure, part of the 30S ribosomal subunit. Contacts proteins S9 and S11.

In terms of biological role, one of the primary rRNA binding proteins, it binds directly to 16S rRNA where it nucleates assembly of the head domain of the 30S subunit. Is located at the subunit interface close to the decoding center, probably blocks exit of the E-site tRNA. This Jannaschia sp. (strain CCS1) protein is Small ribosomal subunit protein uS7.